The following is a 316-amino-acid chain: MSPVISHPRSAAARHQSDELSPITITVDCPAKTNLTLEVGPAHDEWGGRHELDTIYCAIGVYDTVTATAKQPGAGFSLELEGAYLGDLASSRSDMRRNHAVLALFAMAQAAEREPDVALTITKRIPVGAGLGGGSADAAATMLAVNRLWELNWPIERLRTIAATLGADMPFCLTGGLAYGTGFGERITDIAPGSRDELALIEQGFSGEVLVGAYQSQLSTPEVYHTFDIVGAAEGDRNHLQAAAISLHPRSGQAIDAATQAGASHAFVSGSGPSVVAFAADEAAAQRIIEVWRDTAVVDRIIRAKSPEHPNISVRQ.

The active site involves K32. Position 126 to 136 (126 to 136 (PVGAGLGGGSA)) interacts with ATP. D168 is an active-site residue.

The protein belongs to the GHMP kinase family. IspE subfamily.

The enzyme catalyses 4-CDP-2-C-methyl-D-erythritol + ATP = 4-CDP-2-C-methyl-D-erythritol 2-phosphate + ADP + H(+). The protein operates within isoprenoid biosynthesis; isopentenyl diphosphate biosynthesis via DXP pathway; isopentenyl diphosphate from 1-deoxy-D-xylulose 5-phosphate: step 3/6. Catalyzes the phosphorylation of the position 2 hydroxy group of 4-diphosphocytidyl-2C-methyl-D-erythritol. This is 4-diphosphocytidyl-2-C-methyl-D-erythritol kinase from Bifidobacterium longum (strain NCC 2705).